Here is a 342-residue protein sequence, read N- to C-terminus: MAPSFDFAASILLCAEDNTAILDLGEESEEISWVVGVDASLGDLSMDFPLQSDDCIEALLGREEQQHIPMEGYLQRLLLQPDGLDLVAVRSDAIDWIWKVHELYKFGPLTAVLSVNYLDRFLSVFDLPQEEACMTQLLAVASLSLAAKMEETVVPHPLDLQVCDAKYVFETRTIKRMELAVLNALKWRMQAVTACSFIDYYLHKFNDDDTPSTSALSRSVDLILSTCKVAEFLVFRPSEIAASVALVALEEHETSMFERVATCYKNLKKERVLRCYEMIQDKIIMRNIMRQSAGSVFSIPKSPIGVLDAAACISQQSEDTFVGSPATNYESSASSKRRRICR.

The span at 322–334 (VGSPATNYESSAS) shows a compositional bias: polar residues. The interval 322–342 (VGSPATNYESSASSKRRRICR) is disordered.

This sequence belongs to the cyclin family. Cyclin D subfamily.

In Oryza sativa subsp. japonica (Rice), this protein is Cyclin-D3-1 (CYCD3-1).